A 453-amino-acid chain; its full sequence is Phosphoglucosamine mutase (453 aa).

The Phosphoserine intermediate role is filled by Ser-109. Mg(2+)-binding residues include Ser-109, Asp-246, Asp-248, and Asp-250. Residue Ser-109 is modified to Phosphoserine.

This sequence belongs to the phosphohexose mutase family. The cofactor is Mg(2+). Post-translationally, activated by phosphorylation.

The enzyme catalyses alpha-D-glucosamine 1-phosphate = D-glucosamine 6-phosphate. Functionally, catalyzes the conversion of glucosamine-6-phosphate to glucosamine-1-phosphate. The protein is Phosphoglucosamine mutase of Leifsonia xyli subsp. xyli (strain CTCB07).